The sequence spans 370 residues: Quinolinate synthase (370 aa).

Residues H62 and S83 each contribute to the iminosuccinate site. C128 is a [4Fe-4S] cluster binding site. Iminosuccinate contacts are provided by residues 154–156 (YAN) and S171. C215 serves as a coordination point for [4Fe-4S] cluster. Residues 241–243 (HPE) and T258 each bind iminosuccinate. C312 serves as a coordination point for [4Fe-4S] cluster.

This sequence belongs to the quinolinate synthase family. Type 1 subfamily. Requires [4Fe-4S] cluster as cofactor.

The protein localises to the cytoplasm. It catalyses the reaction iminosuccinate + dihydroxyacetone phosphate = quinolinate + phosphate + 2 H2O + H(+). It participates in cofactor biosynthesis; NAD(+) biosynthesis; quinolinate from iminoaspartate: step 1/1. Functionally, catalyzes the condensation of iminoaspartate with dihydroxyacetone phosphate to form quinolinate. This chain is Quinolinate synthase, found in Neisseria meningitidis serogroup B (strain ATCC BAA-335 / MC58).